The chain runs to 176 residues: Co-chaperone protein HscB homolog (176 aa).

In terms of domain architecture, J spans 8–80 (DFFALFGLPV…LRRATYLLKL (73 aa)).

The protein belongs to the HscB family. In terms of assembly, interacts with HscA and stimulates its ATPase activity.

Functionally, co-chaperone involved in the maturation of iron-sulfur cluster-containing proteins. Seems to help targeting proteins to be folded toward HscA. In Cupriavidus taiwanensis (strain DSM 17343 / BCRC 17206 / CCUG 44338 / CIP 107171 / LMG 19424 / R1) (Ralstonia taiwanensis (strain LMG 19424)), this protein is Co-chaperone protein HscB homolog.